The chain runs to 706 residues: Glutamine-dependent NAD(+) synthetase (706 aa).

Positions Val-5–Leu-275 constitute a CN hydrolase domain. Residue Glu-45 is the Proton acceptor; for glutaminase activity of the active site. Lys-114 functions as the For glutaminase activity in the catalytic mechanism. The Nucleophile; for glutaminase activity role is filled by Cys-175. The ligase stretch occupies residues Tyr-325–Asp-706. Residue Pro-355–Ser-362 coordinates ATP. Residue Ser-357 is part of the active site.

In the C-terminal section; belongs to the NAD synthetase family. In terms of assembly, homohexamer.

It carries out the reaction deamido-NAD(+) + L-glutamine + ATP + H2O = L-glutamate + AMP + diphosphate + NAD(+) + H(+). The protein operates within cofactor biosynthesis; NAD(+) biosynthesis; NAD(+) from deamido-NAD(+) (L-Gln route): step 1/1. Its function is as follows. Catalyzes the final step of the nicotinamide adenine dinucleotide (NAD) de novo synthesis pathway, the ATP-dependent amidation of deamido-NAD using L-glutamine as a nitrogen source. This Homo sapiens (Human) protein is Glutamine-dependent NAD(+) synthetase (NADSYN1).